Reading from the N-terminus, the 655-residue chain is p-hydroxybenzoic acid efflux pump subunit AaeB (655 aa).

The next 11 membrane-spanning stretches (helical) occupy residues 13 to 33, 38 to 58, 69 to 89, 93 to 113, 121 to 141, 152 to 172, 370 to 390, 407 to 427, 431 to 451, 459 to 479, and 482 to 502; these read FAVK…HFQL, WAVL…GGEP, LRII…IAMI, LLMI…SSLV, WGLA…EPLL, EIVI…PRSI, LFWL…IAVV, FIYG…VIIP, QSML…GIEV, MGAL…TFHF, and FLDS…VILL.

This sequence belongs to the aromatic acid exporter ArAE (TC 2.A.85) family.

It is found in the cell inner membrane. In terms of biological role, forms an efflux pump with AaeA. Could function as a metabolic relief valve, allowing to eliminate certain compounds when they accumulate to high levels in the cell. This chain is p-hydroxybenzoic acid efflux pump subunit AaeB, found in Shigella boydii serotype 18 (strain CDC 3083-94 / BS512).